The chain runs to 496 residues: Glycerol kinase (496 aa).

T12 lines the ADP pocket. T12, T13, and S14 together coordinate ATP. Sn-glycerol 3-phosphate is bound at residue T12. Residue R16 coordinates ADP. The sn-glycerol 3-phosphate site is built by R82, E83, and Y134. 3 residues coordinate glycerol: R82, E83, and Y134. H230 bears the Phosphohistidine; by HPr mark. D244 is a binding site for sn-glycerol 3-phosphate. Glycerol is bound by residues D244 and Q245. Residues T266 and G309 each contribute to the ADP site. T266, G309, Q313, and G410 together coordinate ATP. Positions 410 and 414 each coordinate ADP.

The protein belongs to the FGGY kinase family. As to quaternary structure, homotetramer and homodimer (in equilibrium). In terms of processing, the phosphoenolpyruvate-dependent sugar phosphotransferase system (PTS), including enzyme I, and histidine-containing protein (HPr) are required for the phosphorylation, which leads to the activation of the enzyme.

The enzyme catalyses glycerol + ATP = sn-glycerol 3-phosphate + ADP + H(+). It participates in polyol metabolism; glycerol degradation via glycerol kinase pathway; sn-glycerol 3-phosphate from glycerol: step 1/1. With respect to regulation, activated by phosphorylation and inhibited by fructose 1,6-bisphosphate (FBP). In terms of biological role, key enzyme in the regulation of glycerol uptake and metabolism. Catalyzes the phosphorylation of glycerol to yield sn-glycerol 3-phosphate. This chain is Glycerol kinase, found in Bacillus cereus (strain ATCC 14579 / DSM 31 / CCUG 7414 / JCM 2152 / NBRC 15305 / NCIMB 9373 / NCTC 2599 / NRRL B-3711).